The primary structure comprises 185 residues: Probable chorismate pyruvate-lyase (185 aa).

Residues arginine 75, leucine 113, and glutamate 174 each coordinate substrate.

Belongs to the UbiC family.

The protein resides in the cytoplasm. The catalysed reaction is chorismate = 4-hydroxybenzoate + pyruvate. It participates in cofactor biosynthesis; ubiquinone biosynthesis. Functionally, removes the pyruvyl group from chorismate, with concomitant aromatization of the ring, to provide 4-hydroxybenzoate (4HB) for the ubiquinone pathway. The protein is Probable chorismate pyruvate-lyase of Aromatoleum aromaticum (strain DSM 19018 / LMG 30748 / EbN1) (Azoarcus sp. (strain EbN1)).